Here is a 1639-residue protein sequence, read N- to C-terminus: Mediator of RNA polymerase II transcription subunit 14 (1639 aa).

The LXXLL motif 1 signature appears at 49–53 (LAELL). 2 disordered regions span residues 561–586 (GQSPDVLSGQPPQPSAAGGPAPGSDS) and 709–755 (LPQP…KTVH). Residues 575-586 (SAAGGPAPGSDS) are compositionally biased toward low complexity. A compositionally biased stretch (pro residues) spans 711-721 (QPKPPQAPPTP). Positions 722-748 (QQQQQQQQQQQQPGTSDAKSSGAGASA) are enriched in low complexity. The LXXLL motif 2 signature appears at 768–772 (LKRLL). Disordered regions lie at residues 1039 to 1243 (RRSQ…HHYT) and 1558 to 1639 (MQPG…GGPN). 2 stretches are compositionally biased toward gly residues: residues 1062 to 1088 (GNNGGGGGGGGGAGGGANTFLSGGTGM) and 1122 to 1142 (IGGGGGAGGAGGQGGQGGQGG). A compositionally biased stretch (polar residues) spans 1189 to 1201 (GPSSLSYMQSHTD). Over residues 1219–1229 (PGMPRPSPRPG) the composition is skewed to pro residues. The segment covering 1558–1579 (MQPGGGPGVPGGPGGPMGGQIG) has biased composition (gly residues). The span at 1589–1603 (VGSSPSPMMHSPMQQ) shows a compositional bias: low complexity. Residues 1604–1639 (MGGGGPQPGAYGGMVGGPGGGPQSGGPVGGGPGGPN) are compositionally biased toward gly residues.

The protein belongs to the Mediator complex subunit 14 family. In terms of assembly, component of the Mediator complex.

It localises to the nucleus. Component of the Mediator complex, a coactivator involved in the regulated transcription of nearly all RNA polymerase II-dependent genes. Mediator functions as a bridge to convey information from gene-specific regulatory proteins to the basal RNA polymerase II transcription machinery. Mediator is recruited to promoters by direct interactions with regulatory proteins and serves as a scaffold for the assembly of a functional preinitiation complex with RNA polymerase II and the general transcription factors. The protein is Mediator of RNA polymerase II transcription subunit 14 (MED14) of Anopheles gambiae (African malaria mosquito).